The chain runs to 100 residues: Small ribosomal subunit protein uS14c (100 aa).

The segment at 1 to 31 (MARKSLIQREKKRQKLEQKYHSIRRSSKKEI) is disordered.

The protein belongs to the universal ribosomal protein uS14 family. In terms of assembly, part of the 30S ribosomal subunit.

It is found in the plastid. The protein resides in the chloroplast. Binds 16S rRNA, required for the assembly of 30S particles. The polypeptide is Small ribosomal subunit protein uS14c (Solanum bulbocastanum (Wild potato)).